The primary structure comprises 495 residues: ATP synthase subunit beta, chloroplastic (495 aa).

An ATP-binding site is contributed by 172–179 (GGAGVGKT).

Belongs to the ATPase alpha/beta chains family. As to quaternary structure, F-type ATPases have 2 components, CF(1) - the catalytic core - and CF(0) - the membrane proton channel. CF(1) has five subunits: alpha(3), beta(3), gamma(1), delta(1), epsilon(1). CF(0) has four main subunits: a(1), b(1), b'(1) and c(9-12).

The protein localises to the plastid. Its subcellular location is the chloroplast thylakoid membrane. It catalyses the reaction ATP + H2O + 4 H(+)(in) = ADP + phosphate + 5 H(+)(out). Its function is as follows. Produces ATP from ADP in the presence of a proton gradient across the membrane. The catalytic sites are hosted primarily by the beta subunits. The polypeptide is ATP synthase subunit beta, chloroplastic (Scilla messeniaca (Greek squill)).